The chain runs to 297 residues: Acetyl-coenzyme A carboxylase carboxyl transferase subunit beta (297 aa).

The 270-residue stretch at 27 to 296 (LWHKCPSCEA…PVETSQVTAK (270 aa)) folds into the CoA carboxyltransferase N-terminal domain. Zn(2+) contacts are provided by cysteine 31, cysteine 34, cysteine 50, and cysteine 53. Residues 31–53 (CPSCEAVLYRPELEKTLDVCPKC) form a C4-type zinc finger.

Belongs to the AccD/PCCB family. In terms of assembly, acetyl-CoA carboxylase is a heterohexamer composed of biotin carboxyl carrier protein (AccB), biotin carboxylase (AccC) and two subunits each of ACCase subunit alpha (AccA) and ACCase subunit beta (AccD). Requires Zn(2+) as cofactor.

It localises to the cytoplasm. It carries out the reaction N(6)-carboxybiotinyl-L-lysyl-[protein] + acetyl-CoA = N(6)-biotinyl-L-lysyl-[protein] + malonyl-CoA. Its pathway is lipid metabolism; malonyl-CoA biosynthesis; malonyl-CoA from acetyl-CoA: step 1/1. In terms of biological role, component of the acetyl coenzyme A carboxylase (ACC) complex. Biotin carboxylase (BC) catalyzes the carboxylation of biotin on its carrier protein (BCCP) and then the CO(2) group is transferred by the transcarboxylase to acetyl-CoA to form malonyl-CoA. This Stutzerimonas stutzeri (strain A1501) (Pseudomonas stutzeri) protein is Acetyl-coenzyme A carboxylase carboxyl transferase subunit beta.